The sequence spans 144 residues: Universal stress protein A (144 aa).

This sequence belongs to the universal stress protein A family. As to quaternary structure, homodimer.

The protein localises to the cytoplasm. Its function is as follows. Required for resistance to DNA-damaging agents. The sequence is that of Universal stress protein A (uspA) from Salmonella typhimurium (strain LT2 / SGSC1412 / ATCC 700720).